Consider the following 215-residue polypeptide: Recombination protein RecR (215 aa).

The C4-type zinc-finger motif lies at 74–89 (CQRCGHLSADPICDIC). The region spanning 97–191 (GVICVVADSR…RVTRIAYGLP (95 aa)) is the Toprim domain.

The protein belongs to the RecR family.

Its function is as follows. May play a role in DNA repair. It seems to be involved in an RecBC-independent recombinational process of DNA repair. It may act with RecF and RecO. The chain is Recombination protein RecR from Synechococcus sp. (strain RCC307).